Consider the following 436-residue polypeptide: Fasciclin-like arabinogalactan protein 15 (436 aa).

An N-terminal signal peptide occupies residues 1-20 (MDDLSKLLFFLLLTISITTA). 2 consecutive FAS1 domains span residues 31–165 (NSNS…ERLL) and 249–392 (VKDF…DGVL). Residues Asn-68 and Asn-271 are each glycosylated (N-linked (GlcNAc...) asparagine).

This sequence belongs to the fasciclin-like AGP family.

It localises to the secreted. Functionally, may be a cell surface adhesion protein. This is Fasciclin-like arabinogalactan protein 15 (FLA15) from Arabidopsis thaliana (Mouse-ear cress).